The sequence spans 54 residues: UPF0391 membrane protein BAB1_1670 (54 aa).

A run of 2 helical transmembrane segments spans residues 5 to 25 (VLVF…GIAG) and 29 to 48 (GIAQ…SLIA).

The protein belongs to the UPF0391 family.

The protein localises to the cell membrane. The protein is UPF0391 membrane protein BAB1_1670 of Brucella abortus (strain 2308).